A 398-amino-acid chain; its full sequence is Cell division protein FtsZ (398 aa).

GTP contacts are provided by residues 21–25, 108–110, Glu139, Arg143, and Asp187; these read GGGGN and GTG.

It belongs to the FtsZ family. Homodimer. Polymerizes to form a dynamic ring structure in a strictly GTP-dependent manner. Interacts directly with several other division proteins.

Its subcellular location is the cytoplasm. Functionally, essential cell division protein that forms a contractile ring structure (Z ring) at the future cell division site. The regulation of the ring assembly controls the timing and the location of cell division. One of the functions of the FtsZ ring is to recruit other cell division proteins to the septum to produce a new cell wall between the dividing cells. Binds GTP and shows GTPase activity. This chain is Cell division protein FtsZ, found in Pseudomonas putida (strain ATCC 47054 / DSM 6125 / CFBP 8728 / NCIMB 11950 / KT2440).